We begin with the raw amino-acid sequence, 944 residues long: Bifunctional uridylyltransferase/uridylyl-removing enzyme (944 aa).

The uridylyltransferase stretch occupies residues M1–A371. Residues G372 to T727 form a uridylyl-removing region. The HD domain maps to V488–L604. ACT domains are found at residues E728–A809 and V839–R918. Residues E911–I944 form a disordered region. Low complexity predominate over residues A925 to A935.

It belongs to the GlnD family. Requires Mg(2+) as cofactor.

The catalysed reaction is [protein-PII]-L-tyrosine + UTP = [protein-PII]-uridylyl-L-tyrosine + diphosphate. It carries out the reaction [protein-PII]-uridylyl-L-tyrosine + H2O = [protein-PII]-L-tyrosine + UMP + H(+). With respect to regulation, uridylyltransferase (UTase) activity is inhibited by glutamine, while glutamine likely activates uridylyl-removing (UR) activity. In terms of biological role, modifies, by uridylylation and deuridylylation, the PII regulatory proteins GlnB and GlnK, in response to the nitrogen status of the cell that GlnD senses through the glutamine level. Under low glutamine levels, catalyzes the conversion of the PII proteins and UTP to PII-UMP and PPi, while under higher glutamine levels, GlnD likely hydrolyzes PII-UMP to PII and UMP (deuridylylation). Thus, controls uridylylation state and activity of the PII proteins, and plays an important role in the regulation of nitrogen metabolism. The polypeptide is Bifunctional uridylyltransferase/uridylyl-removing enzyme (Rhizobium leguminosarum bv. viciae).